Reading from the N-terminus, the 142-residue chain is 3-hydroxyacyl-[acyl-carrier-protein] dehydratase FabZ (142 aa).

H49 is an active-site residue.

The protein belongs to the thioester dehydratase family. FabZ subfamily.

The protein resides in the cytoplasm. It catalyses the reaction a (3R)-hydroxyacyl-[ACP] = a (2E)-enoyl-[ACP] + H2O. Its function is as follows. Involved in unsaturated fatty acids biosynthesis. Catalyzes the dehydration of short chain beta-hydroxyacyl-ACPs and long chain saturated and unsaturated beta-hydroxyacyl-ACPs. In Clostridium novyi (strain NT), this protein is 3-hydroxyacyl-[acyl-carrier-protein] dehydratase FabZ.